The primary structure comprises 779 residues: Transcriptional regulator QRICH1 (779 aa).

Methionine 1 carries the post-translational modification N-acetylmethionine. Residues 6-48 (ENTISFEEYIRVKARSVPQHRMKEFLDSLASKGPEALQEFQQT) enclose the CARD domain. Disordered regions lie at residues 141–163 (QGQA…PSPS) and 219–242 (ALSP…TASV). Serine 346 bears the Phosphoserine mark. Residues lysine 354 and lysine 359 each participate in a glycyl lysine isopeptide (Lys-Gly) (interchain with G-Cter in SUMO2) cross-link. Residues 420–430 (QQQPQQQTPQE) show a composition bias toward low complexity. Positions 420–443 (QQQPQQQTPQEQTPPPPQQQQQQQ) are disordered. A Phosphoserine modification is found at serine 467.

It is found in the nucleus. The protein localises to the cytoplasm. Its subcellular location is the cell membrane. In terms of biological role, transcriptional regulator that acts as a mediator of the integrated stress response (ISR) through transcriptional control of protein homeostasis under conditions of ER stress. Controls the outcome of the unfolded protein response (UPR), an ER-stress response pathway that either promotes recovery of ER homeostasis and cell survival, or triggers the terminal UPR which elicits programmed cell death when ER stress is prolonged and unresolved. ER stress induces QRICH1 translation by a ribosome translation re-initiation mechanism in response to EIF2S1/eIF-2-alpha phosphorylation, and stress-induced QRICH1 regulates a transcriptional program associated with protein translation, protein secretion-mediated proteotoxicity and cell death during the terminal UPR. May cooperate with ATF4 transcription factor signaling to regulate ER homeostasis which is critical for cell viability. Up-regulates CASP3/caspase-3 activity in epithelial cells under ER stress. Central regulator of proteotoxicity associated with ER stress-mediated inflammatory diseases in the intestines and liver. Involved in chondrocyte hypertrophy, a process required for normal longitudinal bone growth. The polypeptide is Transcriptional regulator QRICH1 (QRICH1) (Bos taurus (Bovine)).